The following is a 610-amino-acid chain: ESX-5 secretion system protein EccA5 (610 aa).

Residue 357-364 coordinates ATP; that stretch reads GPPGTGKT.

The protein belongs to the CbxX/CfxQ family. Part of the ESX-5 / type VII secretion system (T7SS), which is composed of cytosolic and membrane components.

It localises to the cytoplasm. Its function is as follows. Part of an ESX-5 / type VII specialized secretion system (T7SS), which exports several proteins. EccA5 exhibits ATPase activity and may provide energy for the export of ESX-5 substrates. This is ESX-5 secretion system protein EccA5 from Mycobacterium bovis (strain ATCC BAA-935 / AF2122/97).